Here is a 296-residue protein sequence, read N- to C-terminus: Acetyl-coenzyme A carboxylase carboxyl transferase subunit beta (296 aa).

Residues 25–294 (VWTKCTACEQ…PFVEPELISE (270 aa)) form the CoA carboxyltransferase N-terminal domain. Zn(2+)-binding residues include cysteine 29, cysteine 32, cysteine 48, and cysteine 51. Residues 29–51 (CTACEQVLYSEELKRNLYVCPKC) form a C4-type zinc finger.

Belongs to the AccD/PCCB family. Acetyl-CoA carboxylase is a heterohexamer composed of biotin carboxyl carrier protein (AccB), biotin carboxylase (AccC) and two subunits each of ACCase subunit alpha (AccA) and ACCase subunit beta (AccD). Requires Zn(2+) as cofactor.

Its subcellular location is the cytoplasm. The enzyme catalyses N(6)-carboxybiotinyl-L-lysyl-[protein] + acetyl-CoA = N(6)-biotinyl-L-lysyl-[protein] + malonyl-CoA. Its pathway is lipid metabolism; malonyl-CoA biosynthesis; malonyl-CoA from acetyl-CoA: step 1/1. In terms of biological role, component of the acetyl coenzyme A carboxylase (ACC) complex. Biotin carboxylase (BC) catalyzes the carboxylation of biotin on its carrier protein (BCCP) and then the CO(2) group is transferred by the transcarboxylase to acetyl-CoA to form malonyl-CoA. The polypeptide is Acetyl-coenzyme A carboxylase carboxyl transferase subunit beta (Haemophilus influenzae (strain 86-028NP)).